We begin with the raw amino-acid sequence, 512 residues long: Glucose-6-phosphate 1-dehydrogenase (512 aa).

Residues R61, E103–F104, and K171 contribute to the NADP(+) site. Residues H201, K205, E239, and D258 each contribute to the substrate site. H263 (proton acceptor) is an active-site residue. Residues K360 and K365 each contribute to the substrate site. The tract at residues Q479–L512 is disordered. The segment covering K496–L512 has biased composition (basic and acidic residues).

The protein belongs to the glucose-6-phosphate dehydrogenase family.

It catalyses the reaction D-glucose 6-phosphate + NADP(+) = 6-phospho-D-glucono-1,5-lactone + NADPH + H(+). It participates in carbohydrate degradation; pentose phosphate pathway; D-ribulose 5-phosphate from D-glucose 6-phosphate (oxidative stage): step 1/3. In terms of biological role, catalyzes the oxidation of glucose 6-phosphate to 6-phosphogluconolactone. This chain is Glucose-6-phosphate 1-dehydrogenase, found in Chlamydia pneumoniae (Chlamydophila pneumoniae).